A 174-amino-acid chain; its full sequence is Shikimate kinase 2 (174 aa).

G12–T17 contributes to the ATP binding site. Mg(2+) contacts are provided by T16 and D32. The substrate site is built by D34, R58, and G79. The segment at Q112–K126 is LID domain. R120 contacts ATP. A substrate-binding site is contributed by R139.

The protein belongs to the shikimate kinase family. AroL subfamily. Monomer. The cofactor is Mg(2+).

It is found in the cytoplasm. It catalyses the reaction shikimate + ATP = 3-phosphoshikimate + ADP + H(+). Its pathway is metabolic intermediate biosynthesis; chorismate biosynthesis; chorismate from D-erythrose 4-phosphate and phosphoenolpyruvate: step 5/7. Catalyzes the specific phosphorylation of the 3-hydroxyl group of shikimic acid using ATP as a cosubstrate. The chain is Shikimate kinase 2 from Escherichia coli O81 (strain ED1a).